The chain runs to 93 residues: DNA-directed RNA polymerase subunit omega (93 aa).

This sequence belongs to the RNA polymerase subunit omega family. In terms of assembly, the RNAP catalytic core consists of 2 alpha, 1 beta, 1 beta' and 1 omega subunit. When a sigma factor is associated with the core the holoenzyme is formed, which can initiate transcription.

The catalysed reaction is RNA(n) + a ribonucleoside 5'-triphosphate = RNA(n+1) + diphosphate. In terms of biological role, promotes RNA polymerase assembly. Latches the N- and C-terminal regions of the beta' subunit thereby facilitating its interaction with the beta and alpha subunits. This chain is DNA-directed RNA polymerase subunit omega, found in Glaesserella parasuis serovar 5 (strain SH0165) (Haemophilus parasuis).